The primary structure comprises 197 residues: Segregation and condensation protein B (197 aa).

The protein belongs to the ScpB family. Homodimer. Homodimerization may be required to stabilize the binding of ScpA to the Smc head domains. Component of a cohesin-like complex composed of ScpA, ScpB and the Smc homodimer, in which ScpA and ScpB bind to the head domain of Smc. The presence of the three proteins is required for the association of the complex with DNA.

The protein localises to the cytoplasm. Functionally, participates in chromosomal partition during cell division. May act via the formation of a condensin-like complex containing Smc and ScpA that pull DNA away from mid-cell into both cell halves. The sequence is that of Segregation and condensation protein B from Malacoplasma penetrans (strain HF-2) (Mycoplasma penetrans).